The primary structure comprises 425 residues: Enolase 2 (425 aa).

Residue Q163 participates in (2R)-2-phosphoglycerate binding. The Proton donor role is filled by E205. Mg(2+)-binding residues include D242, E285, and D312. The (2R)-2-phosphoglycerate site is built by K337, R366, S367, and K388. Catalysis depends on K337, which acts as the Proton acceptor.

The protein belongs to the enolase family. Mg(2+) serves as cofactor.

The protein resides in the cytoplasm. It is found in the secreted. Its subcellular location is the cell surface. It catalyses the reaction (2R)-2-phosphoglycerate = phosphoenolpyruvate + H2O. It functions in the pathway carbohydrate degradation; glycolysis; pyruvate from D-glyceraldehyde 3-phosphate: step 4/5. Functionally, catalyzes the reversible conversion of 2-phosphoglycerate (2-PG) into phosphoenolpyruvate (PEP). It is essential for the degradation of carbohydrates via glycolysis. The sequence is that of Enolase 2 from Cupriavidus metallidurans (strain ATCC 43123 / DSM 2839 / NBRC 102507 / CH34) (Ralstonia metallidurans).